The sequence spans 643 residues: Phosphoenolpyruvate carboxykinase [GTP] (643 aa).

Substrate-binding positions include Arg102 and 253–255 (YGG). Residues Lys262 and His282 each coordinate Mn(2+). Position 304 (Ser304) interacts with substrate. Residue 305–310 (ACGKTN) coordinates GTP. The active site involves Cys306. Asp329 contacts Mn(2+). A substrate-binding site is contributed by 422–424 (NSR). GTP-binding positions include Arg424, Arg455, and 548 to 551 (YGDN).

The protein belongs to the phosphoenolpyruvate carboxykinase [GTP] family. In terms of assembly, monomer. The cofactor is Mn(2+).

The enzyme catalyses oxaloacetate + GTP = phosphoenolpyruvate + GDP + CO2. In parasitic nematodes PEPCK carboxylates phosphoenolpyruvate to oxaloacetate thus introducing the products of glycolysis to mitochondrial metabolism. Functionally, catalyzes the conversion of oxaloacetate (OAA) to phosphoenolpyruvate (PEP), the rate-limiting step in the metabolic pathway that produces glucose from lactate and other precursors derived from the citric acid cycle. This chain is Phosphoenolpyruvate carboxykinase [GTP] (PEPCK), found in Ascaris suum (Pig roundworm).